Consider the following 128-residue polypeptide: Large ribosomal subunit protein uL24 (128 aa).

Residues 105–128 are disordered; it reads KAKSRQVGKEKGKYKEETIEKMQE.

It belongs to the universal ribosomal protein uL24 family. In terms of assembly, component of the large ribosomal subunit.

It is found in the cytoplasm. In terms of biological role, component of the large ribosomal subunit. The ribosome is a large ribonucleoprotein complex responsible for the synthesis of proteins in the cell. This is Large ribosomal subunit protein uL24 (RPL26) from Gallus gallus (Chicken).